Consider the following 125-residue polypeptide: Holo-[acyl-carrier-protein] synthase (125 aa).

Residues D8 and E57 each coordinate Mg(2+).

Belongs to the P-Pant transferase superfamily. AcpS family. Mg(2+) is required as a cofactor.

The protein localises to the cytoplasm. It catalyses the reaction apo-[ACP] + CoA = holo-[ACP] + adenosine 3',5'-bisphosphate + H(+). Transfers the 4'-phosphopantetheine moiety from coenzyme A to a Ser of acyl-carrier-protein. The protein is Holo-[acyl-carrier-protein] synthase of Neisseria gonorrhoeae (strain ATCC 700825 / FA 1090).